Here is a 276-residue protein sequence, read N- to C-terminus: MPELPEVETVRRTLLQLVKNKTIADVDVGWPKMIKEPDDVERFIQLLKGQTIEDIGRRGKFLLFVLNDYVLVSHLRMEGRYGLYQPTDEKTKHTHVVFSFTDGSELRYADVRKFGTMHLFAKGAEHVAMPLAQLGVEPFSEQFTVELLEQAYAKTTRAIKTALLDQKTVVGLGNIYVDEALFHAGIHPERTASSLSKEEYHNLHKEIKRTLKEAIEAGGSSIKSYVNGQGEIGMFQQQLHVYGRKQQPCHHCDTAIEKTVVGGRGTHYCPNCQPRP.

The Schiff-base intermediate with DNA role is filled by proline 2. Glutamate 3 acts as the Proton donor in catalysis. Lysine 60 (proton donor; for beta-elimination activity) is an active-site residue. Residues histidine 93 and arginine 112 each contribute to the DNA site. An FPG-type zinc finger spans residues 240–274 (HVYGRKQQPCHHCDTAIEKTVVGGRGTHYCPNCQP). Arginine 264 (proton donor; for delta-elimination activity) is an active-site residue.

Belongs to the FPG family. Monomer. It depends on Zn(2+) as a cofactor.

The enzyme catalyses Hydrolysis of DNA containing ring-opened 7-methylguanine residues, releasing 2,6-diamino-4-hydroxy-5-(N-methyl)formamidopyrimidine.. It catalyses the reaction 2'-deoxyribonucleotide-(2'-deoxyribose 5'-phosphate)-2'-deoxyribonucleotide-DNA = a 3'-end 2'-deoxyribonucleotide-(2,3-dehydro-2,3-deoxyribose 5'-phosphate)-DNA + a 5'-end 5'-phospho-2'-deoxyribonucleoside-DNA + H(+). Involved in base excision repair of DNA damaged by oxidation or by mutagenic agents. Acts as a DNA glycosylase that recognizes and removes damaged bases. Has a preference for oxidized purines, such as 7,8-dihydro-8-oxoguanine (8-oxoG). Has AP (apurinic/apyrimidinic) lyase activity and introduces nicks in the DNA strand. Cleaves the DNA backbone by beta-delta elimination to generate a single-strand break at the site of the removed base with both 3'- and 5'-phosphates. The sequence is that of Formamidopyrimidine-DNA glycosylase from Shouchella clausii (strain KSM-K16) (Alkalihalobacillus clausii).